Consider the following 252-residue polypeptide: Geranylgeranylglyceryl phosphate synthase (252 aa).

Mg(2+) contacts are provided by aspartate 27 and serine 56. Residues 175–181 (YLEAGSG), 206–207 (GG), and 228–229 (GT) contribute to the sn-glycerol 1-phosphate site.

It belongs to the GGGP/HepGP synthase family. Group II subfamily. Mg(2+) is required as a cofactor.

The protein resides in the cytoplasm. The enzyme catalyses sn-glycerol 1-phosphate + (2E,6E,10E)-geranylgeranyl diphosphate = sn-3-O-(geranylgeranyl)glycerol 1-phosphate + diphosphate. The protein operates within membrane lipid metabolism; glycerophospholipid metabolism. Functionally, prenyltransferase that catalyzes the transfer of the geranylgeranyl moiety of geranylgeranyl diphosphate (GGPP) to the C3 hydroxyl of sn-glycerol-1-phosphate (G1P). This reaction is the first ether-bond-formation step in the biosynthesis of archaeal membrane lipids. The polypeptide is Geranylgeranylglyceryl phosphate synthase (Pyrococcus abyssi (strain GE5 / Orsay)).